The following is a 310-amino-acid chain: Cytochrome f (310 aa).

The first 27 residues, 1-27 (MRRHLSLFLGSLVIGLALLIAPAASWA), serve as a signal peptide directing secretion. Tyrosine 28, cysteine 48, cysteine 51, and histidine 52 together coordinate heme. The chain crosses the membrane as a helical span at residues 277-297 (IYGLLAFFAAVALAQIMLVLK).

This sequence belongs to the cytochrome f family. In terms of assembly, the 4 large subunits of the cytochrome b6-f complex are cytochrome b6, subunit IV (17 kDa polypeptide, PetD), cytochrome f and the Rieske protein, while the 4 small subunits are PetG, PetL, PetM and PetN. The complex functions as a dimer. Heme is required as a cofactor.

It localises to the cellular thylakoid membrane. Component of the cytochrome b6-f complex, which mediates electron transfer between photosystem II (PSII) and photosystem I (PSI), cyclic electron flow around PSI, and state transitions. The protein is Cytochrome f of Synechococcus sp. (strain CC9605).